Reading from the N-terminus, the 499-residue chain is Spore germination protein GerQA (499 aa).

The next 3 membrane-spanning stretches (helical) occupy residues 285–305, 376–396, and 409–429; these read LFAF…LTYH, SNVL…APIY, and FIIS…SLLL.

This sequence belongs to the GerABKA family.

The protein resides in the membrane. Required for the germination response to inosine. Has no role in L-alanine germination. In Bacillus cereus, this protein is Spore germination protein GerQA (gerQA).